The sequence spans 684 residues: Phenoloxidase 1 (684 aa).

Residues 1-50 (MSDKNKLLLLFDRPLETVIVPRGPDQEAFDVPVDLLSDRYKAIGVQVSNR) constitute a propeptide, removed by PPAF1. A glycan (N-linked (GlcNAc...) asparagine) is linked at Asn-80. 3 residues coordinate Cu cation: His-208, His-212, and His-237. Glu-349 functions as the Proton acceptor in the catalytic mechanism. Residues Asn-352 and Asn-356 are each glycosylated (N-linked (GlcNAc...) asparagine). The Cu cation site is built by His-364, His-368, and His-404. 3 N-linked (GlcNAc...) asparagine glycosylation sites follow: Asn-486, Asn-491, and Asn-545. 2 disulfide bridges follow: Cys-579-Cys-621 and Cys-581-Cys-628.

Belongs to the tyrosinase family. In terms of assembly, dimer. Might form a homodimer or a heterodimer with PPO1. Might interact with PPAF2 (via CLIP domain); the interaction might be required for PPO1 activity. Requires Cu(2+) as cofactor. In terms of processing, propeptide cleaved by PPAF1. In terms of tissue distribution, hemocytes.

Its subcellular location is the secreted. In terms of biological role, this is a copper-containing oxidase that functions in the formation of pigments such as melanins and other polyphenolic compounds. Catalyzes the oxidation of o-diphenols (N-acetyldopamine, 4-methylcatechol and dopamine). Cannot oxidize monophenols and p-phenols (L-tyrosine, tyramine, gentisic acid and hydroquinone). Binds to the surface of hemocytes and is involved in hemocyte melanization. Activation of the enzyme in response to bacterial lipopolysaccharides (LPS) suggests it may play a role in innate immunity. In Holotrichia diomphalia (Korean black chafer), this protein is Phenoloxidase 1.